The chain runs to 847 residues: Follistatin-related protein 5 (847 aa).

The first 20 residues, 1-20, serve as a signal peptide directing secretion; that stretch reads MFKCWSVVLVLGFIFLESEG. The 53-residue stretch at 83–135 folds into the Kazal-like domain; that stretch reads GQAECACMDLCKRHYKPVCGSDGEFYENHCEVHRAACLKKQKITIVHNEDCFF. 3 disulfide bridges follow: C89-C119, C93-C112, and C101-C133. 2 consecutive EF-hand domains span residues 175 to 210 and 211 to 246; these read RKKL…EELG and KDLF…QVIQ. Ca(2+)-binding residues include D188, D190, N192, E199, D226, N228, D230, H232, and E237. Ig-like domains are found at residues 250–337 and 341–426; these read PEDQ…IFQV and PVIR…EDIS. Intrachain disulfides connect C270/C321 and C362/C413. N318 and N394 each carry an N-linked (GlcNAc...) asparagine glycan.

Its subcellular location is the secreted. The polypeptide is Follistatin-related protein 5 (FSTL5) (Homo sapiens (Human)).